A 130-amino-acid chain; its full sequence is uncharacterized protein (130 aa).

The first 18 residues, 1 to 18, serve as a signal peptide directing secretion; it reads MVEVWWSLIGAAVPALIA.

This is an uncharacterized protein from Arabidopsis thaliana (Mouse-ear cress).